The primary structure comprises 552 residues: Serine palmitoyltransferase 3 (552 aa).

The disordered stretch occupies residues 1 to 29 (MANPGGGAVCNGKLHNHKKQSNGSQSRNC). A helical transmembrane segment spans residues 59–79 (PLHVMVFTYMGYGIGTLFGYL). At K371 the chain carries N6-(pyridoxal phosphate)lysine.

It belongs to the class-II pyridoxal-phosphate-dependent aminotransferase family. As to quaternary structure, component of the serine palmitoyltransferase (SPT) complex, which is composed of SPTLC1, SPTLC2 or SPTLC3 and SPTSSA or SPTSSB. The heterodimer consisting of SPTLC1 and SPTLC2/SPTLC3 forms the catalytic core of the enzyme, while SPTSSA or SPTSSB subunits determine substrate specificity. SPT also interacts with ORMDL proteins, especially ORMDL3, which negatively regulate SPT activity in the presence of ceramides. Requires pyridoxal 5'-phosphate as cofactor. Expressed in most tissues, except peripheral blood cells and bone marrow, with highest levels in heart, kidney, liver, uterus and skin.

Its subcellular location is the endoplasmic reticulum membrane. The catalysed reaction is L-serine + hexadecanoyl-CoA + H(+) = 3-oxosphinganine + CO2 + CoA. It catalyses the reaction dodecanoyl-CoA + L-serine + H(+) = 3-oxotetradecasphinganine + CO2 + CoA. The enzyme catalyses tetradecanoyl-CoA + L-serine + H(+) = 3-oxohexadecasphinganine + CO2 + CoA. It carries out the reaction octadecanoyl-CoA + L-serine + H(+) = 3-oxoeicosasphinganine + CO2 + CoA. It functions in the pathway lipid metabolism; sphingolipid metabolism. With respect to regulation, SPT complex catalytic activity is negatively regulated by ORMDL proteins, including ORMDL3, in the presence of ceramides. This mechanism allows to maintain ceramide levels at sufficient concentrations for the production of complex sphingolipids, but which prevents the accumulation of ceramides to levels that trigger apoptosis. Its function is as follows. Component of the serine palmitoyltransferase multisubunit enzyme (SPT) that catalyzes the initial and rate-limiting step in sphingolipid biosynthesis by condensing L-serine and activated acyl-CoA (most commonly palmitoyl-CoA) to form long-chain bases. The SPT complex is composed of SPTLC1, SPTLC2 or SPTLC3 and SPTSSA or SPTSSB. Within this complex, the heterodimer consisting of SPTLC1 and SPTLC2/SPTLC3 forms the catalytic core. The composition of the serine palmitoyltransferase (SPT) complex determines the substrate preference. The SPTLC1-SPTLC2-SPTSSA complex shows a strong preference for C16-CoA substrate, while the SPTLC1-SPTLC3-SPTSSA isozyme uses both C14-CoA and C16-CoA as substrates, with a slight preference for C14-CoA. The SPTLC1-SPTLC2-SPTSSB complex shows a strong preference for C18-CoA substrate, while the SPTLC1-SPTLC3-SPTSSB isozyme displays an ability to use a broader range of acyl-CoAs, without apparent preference. The protein is Serine palmitoyltransferase 3 of Homo sapiens (Human).